Reading from the N-terminus, the 312-residue chain is Coproporphyrin III ferrochelatase (312 aa).

Fe-coproporphyrin III contacts are provided by residues Y13, R30, 46 to 47, S54, and Y125; that span reads RY. 2 residues coordinate Fe(2+): H183 and E264.

The protein belongs to the ferrochelatase family.

It is found in the cytoplasm. It catalyses the reaction Fe-coproporphyrin III + 2 H(+) = coproporphyrin III + Fe(2+). Its pathway is porphyrin-containing compound metabolism; protoheme biosynthesis. Functionally, involved in coproporphyrin-dependent heme b biosynthesis. Catalyzes the insertion of ferrous iron into coproporphyrin III to form Fe-coproporphyrin III. The protein is Coproporphyrin III ferrochelatase of Bacillus pumilus (strain SAFR-032).